Reading from the N-terminus, the 318-residue chain is Putative fimbrium tip subunit Fim1F (318 aa).

Residues 1 to 24 form the signal peptide; it reads MRFNVVLFMLIVALLGGLSTCSSE. Positions 25 to 50 are excised as a propeptide; sequence VPIGFDTDELSFDMSLVLLTGDMQTK.

Belongs to the bacteroidetes fimbrillin superfamily. FimA/Mfa1 family. In terms of assembly, may be part of the fimbrial tip.

The protein localises to the fimbrium. In terms of biological role, putative component of the fimbrium tip. Fimbriae are filamentous appendages on the cell surface that mediate cell adhesion and biofilm formation. This Parabacteroides distasonis (strain ATCC 8503 / DSM 20701 / CIP 104284 / JCM 5825 / NCTC 11152) protein is Putative fimbrium tip subunit Fim1F.